Consider the following 178-residue polypeptide: Probable DNA-directed RNA polymerase subunit delta (178 aa).

In terms of domain architecture, HTH HARE-type spans 14–81 (KSFIDMAYTL…GENLWGLRDW (68 aa)). Positions 114–178 (LGDDDADEDD…AFEDAEDFND (65 aa)) are disordered. The span at 116–178 (DDDADEDDDI…AFEDAEDFND (63 aa)) shows a compositional bias: acidic residues.

Belongs to the RpoE family. RNAP is composed of a core of 2 alpha, a beta and a beta' subunits. The core is associated with a delta subunit and one of several sigma factors.

Functionally, participates in both the initiation and recycling phases of transcription. In the presence of the delta subunit, RNAP displays an increased specificity of transcription, a decreased affinity for nucleic acids, and an increased efficiency of RNA synthesis because of enhanced recycling. The protein is Probable DNA-directed RNA polymerase subunit delta of Staphylococcus epidermidis (strain ATCC 35984 / DSM 28319 / BCRC 17069 / CCUG 31568 / BM 3577 / RP62A).